Reading from the N-terminus, the 208-residue chain is MASIRWLMGSRLSRFVCPFAQLVRQPVLRYVRPPVRALHRGSVRRAAEKNPLNSRARAVEQQYITELDKADALMLRKSHETGFLSWFRNGLLATGIGVIAFVQSDVGREAGYAFFILGGMCVSFGGASYVTSLLSLRRIMLLSLPAVLLHTAVVSSAALFWLCAVSLYIGRLEVEIIHDEDDEEHGADESSECAECRARRDREKGQDK.

Residues 1–45 constitute a mitochondrion transit peptide; it reads MASIRWLMGSRLSRFVCPFAQLVRQPVLRYVRPPVRALHRGSVRR. Helical transmembrane passes span 82–102, 110–130, and 147–167; these read GFLS…IAFV, AGYA…ASYV, and VLLH…AVSL. The span at 181-192 shows a compositional bias: acidic residues; that stretch reads DDEEHGADESSE. The tract at residues 181-208 is disordered; the sequence is DDEEHGADESSECAECRARRDREKGQDK. The span at 194 to 208 shows a compositional bias: basic and acidic residues; sequence AECRARRDREKGQDK.

Belongs to the TMEM160 family.

The protein localises to the mitochondrion inner membrane. The sequence is that of Transmembrane protein 160 from Danio rerio (Zebrafish).